The following is a 238-amino-acid chain: LexA repressor (238 aa).

Positions 26–46 (FDEMKDALDLASKSGIHRLIT) form a DNA-binding region, H-T-H motif. Active-site for autocatalytic cleavage activity residues include Ser-158 and Lys-196.

This sequence belongs to the peptidase S24 family. In terms of assembly, homodimer.

It catalyses the reaction Hydrolysis of Ala-|-Gly bond in repressor LexA.. Represses a number of genes involved in the response to DNA damage (SOS response), including recA and lexA. In the presence of single-stranded DNA, RecA interacts with LexA causing an autocatalytic cleavage which disrupts the DNA-binding part of LexA, leading to derepression of the SOS regulon and eventually DNA repair. This Sinorhizobium medicae (strain WSM419) (Ensifer medicae) protein is LexA repressor.